A 750-amino-acid chain; its full sequence is Photosystem I P700 chlorophyll a apoprotein A1 (750 aa).

8 consecutive transmembrane segments (helical) span residues 70–93 (IFSAHFGQLSIIFLWLSGMYFHGA), 156–179 (LYCTAIGALVFAALMLFAGWFHYH), 195–219 (LNHHLAGLLGLGSLSWAGHQVHVSL), 291–309 (IAHHHLAIAILFLIAGHMY), 346–369 (WHAQLALNLAMLGSLTIVVAHHMY), 385–411 (LSLFTHHMWIGGFLIVGAAAHAAIFMV), 433–455 (AIISHLNWACIFLGFHSFGLYIH), and 531–549 (FLVHHIHAFTIHVTVLILL). Residues cysteine 573 and cysteine 582 each contribute to the [4Fe-4S] cluster site. 2 helical membrane passes run 589–610 (HVFLGLFWMYNAISVVIFHFSW) and 664–686 (LSAYGLFFLGAHFVWAFSLMFLF). Histidine 675 serves as a coordination point for chlorophyll a'. Chlorophyll a-binding residues include methionine 683 and tyrosine 691. Tryptophan 692 contacts phylloquinone. Residues 724–744 (AVGVTHYLLGGIATTWAFFLA) traverse the membrane as a helical segment.

It belongs to the PsaA/PsaB family. The PsaA/B heterodimer binds the P700 chlorophyll special pair and subsequent electron acceptors. PSI consists of a core antenna complex that captures photons, and an electron transfer chain that converts photonic excitation into a charge separation. The eukaryotic PSI reaction center is composed of at least 11 subunits. Requires P700 is a chlorophyll a/chlorophyll a' dimer, A0 is one or more chlorophyll a, A1 is one or both phylloquinones and FX is a shared 4Fe-4S iron-sulfur center. as cofactor.

Its subcellular location is the plastid. It is found in the chloroplast thylakoid membrane. The catalysed reaction is reduced [plastocyanin] + hnu + oxidized [2Fe-2S]-[ferredoxin] = oxidized [plastocyanin] + reduced [2Fe-2S]-[ferredoxin]. Functionally, psaA and PsaB bind P700, the primary electron donor of photosystem I (PSI), as well as the electron acceptors A0, A1 and FX. PSI is a plastocyanin-ferredoxin oxidoreductase, converting photonic excitation into a charge separation, which transfers an electron from the donor P700 chlorophyll pair to the spectroscopically characterized acceptors A0, A1, FX, FA and FB in turn. Oxidized P700 is reduced on the lumenal side of the thylakoid membrane by plastocyanin. The sequence is that of Photosystem I P700 chlorophyll a apoprotein A1 from Nandina domestica (Heavenly bamboo).